Here is a 179-residue protein sequence, read N- to C-terminus: Signal peptidase complex subunit 2 (179 aa).

At 1–48 the chain is on the cytoplasmic side; it reads MSGNNVQEEDSTFHVSNLYSETEIKKITQDFISEKIREQNFEEIVKYS. The chain crosses the membrane as a helical span at residues 49 to 69; the sequence is NIRIFLSLVLIVIGTYCSIFV. At 70–74 the chain is on the extracellular side; it reads QYKKN. The helical transmembrane segment at 75 to 95 threads the bilayer; that stretch reads PVIMIQLLVAFFVVSTTLIIF. Residues 96–179 are Cytoplasmic-facing; it reads EYFFFDDVFM…AHGRTLKLKN (84 aa).

The protein belongs to the SPCS2 family. Component of the signal peptidase complex (SPC) composed of a catalytic subunit SEC11/SPC21 and three accessory subunits SPC25, SPC3/SPC22, SPC1/SPC12. The complex induces a local thinning of the ER membrane which is used to measure the length of the signal peptide (SP) h-region of protein substrates. This ensures the selectivity of the complex towards h-regions shorter than 18-20 amino acids. Within the complex, interacts with SEC11/SPC21. Component of a complex composed of SPC25 and PMV; the interaction is mediated via the transmembrane domains. The complex interacts with the SEC61 channel-forming translocon complex and is involved in the recognition and import of PEXEL motif-containing proteins into the ER for subsequent export.

It is found in the endoplasmic reticulum membrane. In terms of biological role, component of the signal peptidase complex (SPC) which catalyzes the cleavage of N-terminal signal sequences from nascent proteins as they are translocated into the lumen of the endoplasmic reticulum. Enhances the enzymatic activity of SPC and facilitates the interactions between different components of the translocation site. Also, regulatory component of the CSP25-plasmepsin PMV complex which cleaves the pentameric localization motif RxLxE/Q/D (termed Plasmodium export element (PEXEL)) located downstream of the N-terminal secretory signal sequence of several proteins. This chain is Signal peptidase complex subunit 2, found in Plasmodium falciparum (isolate 3D7).